Here is a 332-residue protein sequence, read N- to C-terminus: Beta-ketoacyl-[acyl-carrier-protein] synthase III (332 aa).

Residues Cys-116 and His-257 contribute to the active site. The tract at residues 258–262 (QANQR) is ACP-binding. Asn-287 is a catalytic residue.

This sequence belongs to the thiolase-like superfamily. FabH family. Homodimer.

The protein resides in the cytoplasm. It carries out the reaction malonyl-[ACP] + acetyl-CoA + H(+) = 3-oxobutanoyl-[ACP] + CO2 + CoA. It functions in the pathway lipid metabolism; fatty acid biosynthesis. In terms of biological role, catalyzes the condensation reaction of fatty acid synthesis by the addition to an acyl acceptor of two carbons from malonyl-ACP. Catalyzes the first condensation reaction which initiates fatty acid synthesis and may therefore play a role in governing the total rate of fatty acid production. Possesses both acetoacetyl-ACP synthase and acetyl transacylase activities. Its substrate specificity determines the biosynthesis of branched-chain and/or straight-chain of fatty acids. This Acaryochloris marina (strain MBIC 11017) protein is Beta-ketoacyl-[acyl-carrier-protein] synthase III.